The following is a 506-amino-acid chain: Glycerol kinase (506 aa).

Threonine 12 contacts ADP. Residues threonine 12, threonine 13, and serine 14 each coordinate ATP. Threonine 12 contacts sn-glycerol 3-phosphate. ADP is bound at residue arginine 16. Sn-glycerol 3-phosphate is bound by residues arginine 82, glutamate 83, tyrosine 134, and aspartate 246. The glycerol site is built by arginine 82, glutamate 83, tyrosine 134, aspartate 246, and glutamine 247. ADP is bound by residues threonine 268 and glycine 312. Residues threonine 268, glycine 312, glutamine 316, and glycine 413 each contribute to the ATP site. 2 residues coordinate ADP: glycine 413 and asparagine 417.

This sequence belongs to the FGGY kinase family.

It catalyses the reaction glycerol + ATP = sn-glycerol 3-phosphate + ADP + H(+). It functions in the pathway polyol metabolism; glycerol degradation via glycerol kinase pathway; sn-glycerol 3-phosphate from glycerol: step 1/1. Its activity is regulated as follows. Inhibited by fructose 1,6-bisphosphate (FBP). Functionally, key enzyme in the regulation of glycerol uptake and metabolism. Catalyzes the phosphorylation of glycerol to yield sn-glycerol 3-phosphate. This chain is Glycerol kinase, found in Leifsonia xyli subsp. xyli (strain CTCB07).